A 438-amino-acid polypeptide reads, in one-letter code: Tyrosine--tRNA ligase (438 aa).

Tyr47 is a binding site for L-tyrosine. A 'HIGH' region motif is present at residues 52-61; the sequence is PTATSLHVGG. Tyr183 and Gln187 together coordinate L-tyrosine. The 'KMSKS' region signature appears at 243–247; it reads KMGKT. ATP is bound at residue Lys246. One can recognise an S4 RNA-binding domain in the interval 370–436; the sequence is LWIVEALQTA…GKRKYALLKI (67 aa).

This sequence belongs to the class-I aminoacyl-tRNA synthetase family. TyrS type 1 subfamily. In terms of assembly, homodimer.

The protein resides in the cytoplasm. It carries out the reaction tRNA(Tyr) + L-tyrosine + ATP = L-tyrosyl-tRNA(Tyr) + AMP + diphosphate + H(+). In terms of biological role, catalyzes the attachment of tyrosine to tRNA(Tyr) in a two-step reaction: tyrosine is first activated by ATP to form Tyr-AMP and then transferred to the acceptor end of tRNA(Tyr). The protein is Tyrosine--tRNA ligase of Rhodopirellula baltica (strain DSM 10527 / NCIMB 13988 / SH1).